A 313-amino-acid polypeptide reads, in one-letter code: Porphobilinogen deaminase (313 aa).

Cysteine 242 carries the S-(dipyrrolylmethanemethyl)cysteine modification.

Belongs to the HMBS family. In terms of assembly, monomer. Requires dipyrromethane as cofactor.

It carries out the reaction 4 porphobilinogen + H2O = hydroxymethylbilane + 4 NH4(+). The protein operates within porphyrin-containing compound metabolism; protoporphyrin-IX biosynthesis; coproporphyrinogen-III from 5-aminolevulinate: step 2/4. In terms of biological role, tetrapolymerization of the monopyrrole PBG into the hydroxymethylbilane pre-uroporphyrinogen in several discrete steps. This chain is Porphobilinogen deaminase, found in Pseudomonas fluorescens (strain SBW25).